We begin with the raw amino-acid sequence, 261 residues long: Eukaryotic translation initiation factor 3 subunit G (261 aa).

Residues 156–180 (QDADSKNALGLRGDGRQMERNRSDE) are disordered. Positions 168-180 (GDGRQMERNRSDE) are enriched in basic and acidic residues. The region spanning 181-259 (NTCRVTNLPQ…MVLKVEWTRP (79 aa)) is the RRM domain.

The protein belongs to the eIF-3 subunit G family. Component of the eukaryotic translation initiation factor 3 (eIF-3) complex.

The protein localises to the cytoplasm. Its function is as follows. RNA-binding component of the eukaryotic translation initiation factor 3 (eIF-3) complex, which is involved in protein synthesis of a specialized repertoire of mRNAs and, together with other initiation factors, stimulates binding of mRNA and methionyl-tRNAi to the 40S ribosome. The eIF-3 complex specifically targets and initiates translation of a subset of mRNAs involved in cell proliferation. This subunit can bind 18S rRNA. In Caenorhabditis briggsae, this protein is Eukaryotic translation initiation factor 3 subunit G.